Here is a 136-residue protein sequence, read N- to C-terminus: MRTLWIVAVWLMGVEGNLFQFGKMIKHKTGKSALLSYSGNPCYCGWGGQGPPQDATDHCCFVHDCCYGEENACYPKTAFTLKFENQIIICDEDPCNYAVCMCDRVAAICGGENVATSDAKYLFYRSMGCEEESVQC.

A signal peptide spans 1–16 (MRTLWIVAVWLMGVEG). 7 disulfide bridges follow: cysteine 42–cysteine 129, cysteine 44–cysteine 60, cysteine 59–cysteine 109, cysteine 65–cysteine 136, cysteine 66–cysteine 102, cysteine 73–cysteine 95, and cysteine 90–cysteine 100. Residues tyrosine 43, glycine 45, and glycine 47 each coordinate Ca(2+). Histidine 63 is an active-site residue. Residue aspartate 64 participates in Ca(2+) binding. Aspartate 103 is a catalytic residue.

This sequence belongs to the phospholipase A2 family. Group II subfamily. D49 sub-subfamily. Ca(2+) serves as cofactor. In terms of processing, glycosylated (2.5%). In terms of tissue distribution, expressed by the venom gland.

The protein localises to the secreted. It carries out the reaction a 1,2-diacyl-sn-glycero-3-phosphocholine + H2O = a 1-acyl-sn-glycero-3-phosphocholine + a fatty acid + H(+). In terms of biological role, snake venom phospholipase A2 that inhibits blood coagulation and platelet aggregation induced by ADP and arachidonic acid. Inhibits tumor cell adhesion and migration in a dose-dependent manner. Abolishes the attachment of human brain microvascular endothelial cells (HBMEC) to fibrinogen (IC(50)=0.2 uM) and dramatically reduces its adhesion to fibronectin (IC(50)=0.3 uM), whereas no effect is observed on type I collagen, vitronectin or laminin 1. Also blocks the cell migration toward fibronectin and fibrinogen. These effects are not dependent of the catalytic activity, but are mediated by alpha-5/beta-1 (ITGA5/ITGB1) and alpha-v-containing (ITGAV) integrins. Also shows anti-angiogenic activity in chicken chorioallantoix membrane assay. Has a relatively high enzymatic activity. PLA2 catalyzes the calcium-dependent hydrolysis of the 2-acyl groups in 3-sn-phosphoglycerides. The protein is Acidic phospholipase A2 CC-PLA2-2 of Cerastes cerastes (Horned desert viper).